Here is a 184-residue protein sequence, read N- to C-terminus: Shikimate kinase (184 aa).

ATP is bound at residue 17-22 (GAGKTT). Threonine 21 contacts Mg(2+). 3 residues coordinate substrate: aspartate 39, arginine 63, and glycine 85. Position 123 (arginine 123) interacts with ATP. Arginine 142 contributes to the substrate binding site.

This sequence belongs to the shikimate kinase family. Monomer. Mg(2+) serves as cofactor.

The protein resides in the cytoplasm. It catalyses the reaction shikimate + ATP = 3-phosphoshikimate + ADP + H(+). The protein operates within metabolic intermediate biosynthesis; chorismate biosynthesis; chorismate from D-erythrose 4-phosphate and phosphoenolpyruvate: step 5/7. Its function is as follows. Catalyzes the specific phosphorylation of the 3-hydroxyl group of shikimic acid using ATP as a cosubstrate. This chain is Shikimate kinase, found in Burkholderia lata (strain ATCC 17760 / DSM 23089 / LMG 22485 / NCIMB 9086 / R18194 / 383).